The primary structure comprises 126 residues: Ribosome-binding factor A (126 aa).

The protein belongs to the RbfA family. As to quaternary structure, monomer. Binds 30S ribosomal subunits, but not 50S ribosomal subunits or 70S ribosomes.

Its subcellular location is the cytoplasm. Its function is as follows. One of several proteins that assist in the late maturation steps of the functional core of the 30S ribosomal subunit. Associates with free 30S ribosomal subunits (but not with 30S subunits that are part of 70S ribosomes or polysomes). Required for efficient processing of 16S rRNA. May interact with the 5'-terminal helix region of 16S rRNA. In Geobacillus sp. (strain WCH70), this protein is Ribosome-binding factor A.